Consider the following 275-residue polypeptide: MSSHYDVQALPAEQREHILRGFGLGWWRQLGQVAIVFGVVLLACWYVGLLDATTLLNGLPSIATLAGEAMPPDFSGYRSWIRPLIDTLAMSIAGTAIAVVFSLVVAFVAARNTAPHPLVFGVARVLLNALRSVPELIMGIIFVAAVGFGALPGVLALGLHSVGMVGKFFAEAIEHVDEAPVEAARAAGATPMQVLLHAVLPQVTPQFADVAIYRWEYNFRASTVMGMVGAGGIGFELMGSLRIMQYQEVAAILLVILAMVTLVDAFSGVLRKHFK.

5 helical membrane passes run 30 to 50, 88 to 108, 136 to 156, 221 to 241, and 249 to 269; these read LGQV…VGLL, LAMS…VAFV, LIMG…GVLA, ASTV…MGSL, and VAAI…FSGV. The ABC transmembrane type-1 domain occupies 84 to 267; that stretch reads LIDTLAMSIA…AMVTLVDAFS (184 aa).

It belongs to the binding-protein-dependent transport system permease family.

It localises to the cell inner membrane. Functionally, probably forms part of a binding-protein-dependent phosphite transporter. Probably responsible for the translocation of the substrate across the membrane. The chain is Phosphite transport system permease protein PtxC (ptxC) from Stutzerimonas stutzeri (Pseudomonas stutzeri).